A 423-amino-acid polypeptide reads, in one-letter code: Histidine--tRNA ligase (423 aa).

Belongs to the class-II aminoacyl-tRNA synthetase family. In terms of assembly, homodimer.

The protein resides in the cytoplasm. The catalysed reaction is tRNA(His) + L-histidine + ATP = L-histidyl-tRNA(His) + AMP + diphosphate + H(+). This chain is Histidine--tRNA ligase, found in Laribacter hongkongensis (strain HLHK9).